A 233-amino-acid polypeptide reads, in one-letter code: Probable GTP-binding protein EngB (233 aa).

Residues 23–209 (AVPEVAFAGR…QRIVAGWLCL (187 aa)) enclose the EngB-type G domain. GTP-binding positions include 31-38 (GRSNAGKS), 58-62 (GRTQH), 82-85 (DLPG), 149-152 (TKAD), and 188-190 (FSS). The Mg(2+) site is built by Ser-38 and Thr-60.

The protein belongs to the TRAFAC class TrmE-Era-EngA-EngB-Septin-like GTPase superfamily. EngB GTPase family. Mg(2+) serves as cofactor.

Necessary for normal cell division and for the maintenance of normal septation. In Ralstonia pickettii (strain 12J), this protein is Probable GTP-binding protein EngB.